A 59-amino-acid polypeptide reads, in one-letter code: uncharacterized protein (59 aa).

This is an uncharacterized protein from Bacillus subtilis (strain 168).